A 272-amino-acid polypeptide reads, in one-letter code: 5'-nucleotidase SurE (272 aa).

The a divalent metal cation site is built by Asp-28, Asp-29, Ser-59, and Asn-115.

Belongs to the SurE nucleotidase family. The cofactor is a divalent metal cation.

The protein localises to the cytoplasm. It catalyses the reaction a ribonucleoside 5'-phosphate + H2O = a ribonucleoside + phosphate. Functionally, nucleotidase that shows phosphatase activity on nucleoside 5'-monophosphates. This is 5'-nucleotidase SurE from Chlorobium chlorochromatii (strain CaD3).